Consider the following 229-residue polypeptide: 5'-methylthioadenosine/S-adenosylhomocysteine nucleosidase (229 aa).

Catalysis depends on E12, which acts as the Proton acceptor. Substrate contacts are provided by residues G78, I152, and 173–174; that span reads ME. D197 (proton donor) is an active-site residue.

The protein belongs to the PNP/UDP phosphorylase family. MtnN subfamily.

It carries out the reaction S-adenosyl-L-homocysteine + H2O = S-(5-deoxy-D-ribos-5-yl)-L-homocysteine + adenine. The enzyme catalyses S-methyl-5'-thioadenosine + H2O = 5-(methylsulfanyl)-D-ribose + adenine. The catalysed reaction is 5'-deoxyadenosine + H2O = 5-deoxy-D-ribose + adenine. It participates in amino-acid biosynthesis; L-methionine biosynthesis via salvage pathway; S-methyl-5-thio-alpha-D-ribose 1-phosphate from S-methyl-5'-thioadenosine (hydrolase route): step 1/2. Its function is as follows. Catalyzes the irreversible cleavage of the glycosidic bond in both 5'-methylthioadenosine (MTA) and S-adenosylhomocysteine (SAH/AdoHcy) to adenine and the corresponding thioribose, 5'-methylthioribose and S-ribosylhomocysteine, respectively. Also cleaves 5'-deoxyadenosine, a toxic by-product of radical S-adenosylmethionine (SAM) enzymes, into 5-deoxyribose and adenine. The polypeptide is 5'-methylthioadenosine/S-adenosylhomocysteine nucleosidase (Haemophilus influenzae (strain PittEE)).